The primary structure comprises 479 residues: Gamma-aminobutyric acid receptor subunit rho-1 (479 aa).

A signal peptide spans 1–21 (MLAVPNMRFGIFLLWWGWVLA). Residues 22–280 (TESRMHWPGR…LYINFTLRRH (259 aa)) are Extracellular-facing. The tract at residues 32 to 55 (EVHEMSKKGRPQRQRREVHEDAHK) is disordered. A compositionally biased stretch (basic and acidic residues) spans 45–55 (QRREVHEDAHK). Residue Arg125 coordinates 4-aminobutanoate. An N-linked (GlcNAc...) asparagine glycan is attached at Asn140. Residue Ser189 coordinates 4-aminobutanoate. Cys198 and Cys212 are oxidised to a cystine. Glu217 provides a ligand contact to 4-aminobutanoate. N-linked (GlcNAc...) asparagine glycosylation is found at Asn234 and Asn274. Residues 281 to 301 (IFFFLLQTYFPATLMVMLSWV) traverse the membrane as a helical segment. Over 302 to 313 (SFWIDRRAVPAR) the chain is Cytoplasmic. A helical transmembrane segment spans residues 314 to 334 (VPLGITTVLTMSTIITGVNAS). Topologically, residues 335-345 (MPRVSYIKAVD) are extracellular. The helical transmembrane segment at 346–366 (IYLWVSFVFVFLSVLEYAAVN) threads the bilayer. Residues 367 to 457 (YLTTVQERKE…MRIDTHAIDK (91 aa)) lie on the Cytoplasmic side of the membrane. A helical membrane pass occupies residues 458–478 (YSRIIFPAAYILFNLIYWSIF). Residue Ser479 is a topological domain, extracellular.

This sequence belongs to the ligand-gated ion channel (TC 1.A.9) family. Gamma-aminobutyric acid receptor (TC 1.A.9.5) subfamily. GABRR1 sub-subfamily. In terms of assembly, three rho subunits (rho-1/GBRR1, rho-2/GBRR2 and rho-3/GBRR3) coassemble either to form functional homopentamers or heteropentamers. Rho-1/GBRR1 subunits can also associate with alpha-1/GBRA1 subunits to form a functional GABAAR. Interacts with SQSTM1. In terms of tissue distribution, highly expressed in the retina. Expressed in a lesser extent in brain, lung and thymus.

Its subcellular location is the postsynaptic cell membrane. The protein resides in the cell membrane. It carries out the reaction chloride(in) = chloride(out). Inhibited by TPMPA, a rho-specific antagonist, when forming a homopentamer. In contrast with other GABAARs, rho-1 GABAAR is not inhibited by bicuculline, when forming a homopentamer. Rho subunit of the pentameric ligand-gated chloride channels responsible for mediating the effects of gamma-aminobutyric acid (GABA), the major inhibitory neurotransmitter in the brain. Rho-containing GABA-gated chloride channels are a subclass of GABA(A) receptors (GABAARs) entirely composed of rho subunits, where GABA molecules bind at the rho intersubunit interfaces. When activated by GABA, rho-GABAARs selectively allow the flow of chloride anions across the cell membrane down their electrochemical gradient. Rho-1 subunits are primarily expressed in retina where rho-1-containing GABAARs may play a role in retinal neurotransmission. Rho-1 GABAARs are also involved in neuronal tonic (extrasynaptic) and phasic (synaptic) transmission in the Purkinje neurons of the cerebellum. Rho-1 GABAARs may also contribute to the regulation of glial development in the cerebellum by controlling extrasynaptic transmission. The protein is Gamma-aminobutyric acid receptor subunit rho-1 of Homo sapiens (Human).